The chain runs to 151 residues: UPF0756 membrane protein Lreu_0946 (151 aa).

The next 4 membrane-spanning stretches (helical) occupy residues 4 to 24 (WLFLALVLLIAIFGHNSSLII), 52 to 72 (WGVTVISVAILIPIATGQIGF), 77 to 97 (AAFKTPAGWIAVGMGIAVAIL), and 115 to 135 (LVLGTIIGVVAFKGIAAGPVI).

Belongs to the UPF0756 family.

Its subcellular location is the cell membrane. This Limosilactobacillus reuteri (strain DSM 20016) (Lactobacillus reuteri) protein is UPF0756 membrane protein Lreu_0946.